Reading from the N-terminus, the 128-residue chain is Probable 4-amino-4-deoxy-L-arabinose-phosphoundecaprenol flippase subunit ArnF (128 aa).

The chain crosses the membrane as a helical span at residues 1–21 (MGLMWGLFSVIIASAAQLSLG). Residues 22–35 (YAASHLPPMTQFWD) are Periplasmic-facing. Residues 36-56 (FIAAFFAFGPGARMLVVGLVG) traverse the membrane as a helical segment. Over 57-76 (YLLSVFCWYKALHQLALSKA) the chain is Cytoplasmic. The helical transmembrane segment at 77–97 (YALLSMSYVLVWIASMVLPGW) threads the bilayer. Over 98 to 100 (EGT) the chain is Periplasmic. Residues 101-121 (FSLKALLGVACIMSGLMLIFL) traverse the membrane as a helical segment. Residues 122-128 (PTTKQRY) are Cytoplasmic-facing.

It belongs to the ArnF family. In terms of assembly, heterodimer of ArnE and ArnF.

The protein resides in the cell inner membrane. It functions in the pathway bacterial outer membrane biogenesis; lipopolysaccharide biosynthesis. Functionally, translocates 4-amino-4-deoxy-L-arabinose-phosphoundecaprenol (alpha-L-Ara4N-phosphoundecaprenol) from the cytoplasmic to the periplasmic side of the inner membrane. In Escherichia fergusonii (strain ATCC 35469 / DSM 13698 / CCUG 18766 / IAM 14443 / JCM 21226 / LMG 7866 / NBRC 102419 / NCTC 12128 / CDC 0568-73), this protein is Probable 4-amino-4-deoxy-L-arabinose-phosphoundecaprenol flippase subunit ArnF.